The sequence spans 2340 residues: Proto-oncogene tyrosine-protein kinase ROS (2340 aa).

An N-terminal signal peptide occupies residues 1 to 28 (MKNICWLTLKLVKFVVLGCIIWISVAQS). The Extracellular segment spans residues 29 to 1854 (TVLSSCLTSC…EDGVWITETS (1826 aa)). The N-linked (GlcNAc...) asparagine glycan is linked to Asn-53. Fibronectin type-III domains lie at 111 to 206 (LPTA…VPET) and 207 to 295 (APLI…PSPS). 2 N-linked (GlcNAc...) asparagine glycosylation sites follow: Asn-334 and Asn-362. A Fibronectin type-III 3 domain is found at 567-667 (LPGHPQEVSV…APSVGTTLVP (101 aa)). N-linked (GlcNAc...) asparagine glycosylation is found at Asn-935 and Asn-1011. 2 consecutive Fibronectin type-III domains span residues 943-1038 (IPDP…SVPS) and 1039-1146 (APEN…TSEI). Asn-1243 carries N-linked (GlcNAc...) asparagine glycosylation. 4 Fibronectin type-III domains span residues 1442–1549 (ASDM…TKSG), 1550–1649 (VPGA…VNMF), 1651–1744 (TPEK…TKAG), and 1745–1846 (VPSK…LVED). An N-linked (GlcNAc...) asparagine glycan is attached at Asn-1676. The chain crosses the membrane as a helical span at residues 1855–1875 (FILTIIVGIFLVATVPLTFVW). The Cytoplasmic portion of the chain corresponds to 1876–2340 (HRSLKSHKAS…AHSEHGDVSE (465 aa)). In terms of domain architecture, Protein kinase spans 1938–2216 (LSLRLLLGSG…QLQLFRNVFL (279 aa)). ATP-binding positions include 1944–1952 (LGSGAFGEV) and Lys-1973. Residue Asp-2072 is the Proton acceptor of the active site. Residues Tyr-2267 and Tyr-2327 each carry the phosphotyrosine; by autocatalysis modification.

It belongs to the protein kinase superfamily. Tyr protein kinase family. Insulin receptor subfamily. As to quaternary structure, interacts with PTPN11; may activate the PI3 kinase-mTOR signaling pathway. Interacts with VAV3; constitutive interaction mediating VAV3 phosphorylation. Interacts with PTPN6 (via SH2 1 domain); the interaction is direct and promotes ROS1 dephosphorylation. In terms of processing, phosphorylated. Probably autophosphorylates. Phosphorylation at Tyr-2267 and/or Tyr-2327 recruits PTPN11. Phosphorylation at Tyr-2267 is required for the interaction with PTPN6 that mediates ROS1 dephosphorylation. Phosphorylation at Tyr-2267 stimulates the kinase activity and the activation of the ERK1 signaling cascade. In terms of tissue distribution, expressed by epithelial cells of the caput epididymis (at protein level).

Its subcellular location is the cell membrane. It carries out the reaction L-tyrosyl-[protein] + ATP = O-phospho-L-tyrosyl-[protein] + ADP + H(+). With respect to regulation, inhibited by dephosphorylation by PTPN6. Functionally, receptor tyrosine kinase (RTK) that plays a role in epithelial cell differentiation and regionalization of the proximal epididymal epithelium. NELL2 is an endogenous ligand for ROS1. Upon endogenous stimulation by NELL2, ROS1 activates the intracellular signaling pathway and triggers epididymal epithelial differentiation and subsequent sperm maturation. May activate several downstream signaling pathways related to cell differentiation, proliferation, growth and survival including the PI3 kinase-mTOR signaling pathway. Mediates the phosphorylation of PTPN11, an activator of this pathway. May also phosphorylate and activate the transcription factor STAT3 to control anchorage-independent cell growth. Mediates the phosphorylation and the activation of VAV3, a guanine nucleotide exchange factor regulating cell morphology. May activate other downstream signaling proteins including AKT1, MAPK1, MAPK3, IRS1, and PLCG2. This chain is Proto-oncogene tyrosine-protein kinase ROS (Ros1), found in Mus musculus (Mouse).